A 168-amino-acid chain; its full sequence is Crossover junction endodeoxyribonuclease RuvC (168 aa).

Active-site residues include aspartate 11, glutamate 71, and aspartate 144. 3 residues coordinate Mg(2+): aspartate 11, glutamate 71, and aspartate 144.

Belongs to the RuvC family. Homodimer which binds Holliday junction (HJ) DNA. The HJ becomes 2-fold symmetrical on binding to RuvC with unstacked arms; it has a different conformation from HJ DNA in complex with RuvA. In the full resolvosome a probable DNA-RuvA(4)-RuvB(12)-RuvC(2) complex forms which resolves the HJ. It depends on Mg(2+) as a cofactor.

It is found in the cytoplasm. It carries out the reaction Endonucleolytic cleavage at a junction such as a reciprocal single-stranded crossover between two homologous DNA duplexes (Holliday junction).. Functionally, the RuvA-RuvB-RuvC complex processes Holliday junction (HJ) DNA during genetic recombination and DNA repair. Endonuclease that resolves HJ intermediates. Cleaves cruciform DNA by making single-stranded nicks across the HJ at symmetrical positions within the homologous arms, yielding a 5'-phosphate and a 3'-hydroxyl group; requires a central core of homology in the junction. The consensus cleavage sequence is 5'-(A/T)TT(C/G)-3'. Cleavage occurs on the 3'-side of the TT dinucleotide at the point of strand exchange. HJ branch migration catalyzed by RuvA-RuvB allows RuvC to scan DNA until it finds its consensus sequence, where it cleaves and resolves the cruciform DNA. In Protochlamydia amoebophila (strain UWE25), this protein is Crossover junction endodeoxyribonuclease RuvC.